The following is a 359-amino-acid chain: 4-galactosyl-N-acetylglucosaminide 3-alpha-L-fucosyltransferase FUT6 (359 aa).

Over 1-14 the chain is Cytoplasmic; it reads MDPLGPAKPQWSWR. A helical; Signal-anchor for type II membrane protein membrane pass occupies residues 15-34; it reads CCLTTLLFQLLMAVCFFSYL. Topologically, residues 35–359 are lumenal; it reads RVSQDDPTVY…QTRGIAAWFT (325 aa). Residues Asn-46, Asn-91, Asn-153, and Asn-184 are each glycosylated (N-linked (GlcNAc...) asparagine). The segment at 73–112 is determines site-specific fucosylation; the sequence is KPIALPRCSEMVPGTADCNITADRKVYPQADAVIVHHREV.

Belongs to the glycosyltransferase 10 family. In terms of assembly, homodimer and monomer. Monomer (secreted form). Post-translationally, N-glycosylated. In terms of processing, proteolytic cleavage releases a secreted glycoform of 43 kDa. Kidney, liver, colon, small intestine, bladder, uterus and salivary gland.

It is found in the golgi apparatus. It localises to the golgi stack membrane. The protein localises to the secreted. The enzyme catalyses a beta-D-galactosyl-(1-&gt;4)-N-acetyl-beta-D-glucosaminyl derivative + GDP-beta-L-fucose = a beta-D-galactosyl-(1-&gt;4)-[alpha-L-fucosyl-(1-&gt;3)]-N-acetyl-beta-D-glucosaminyl derivative + GDP + H(+). It catalyses the reaction an N-acetyl-alpha-neuraminyl-(2-&gt;3)-beta-D-galactosyl-(1-&gt;4)-N-acetyl-beta-D-glucosaminyl derivative + GDP-beta-L-fucose = an alpha-Neu5Ac-(2-&gt;3)-beta-D-Gal-(1-&gt;4)-[alpha-L-Fuc-(1-&gt;3)]-beta-D-GlcNAc derivative + GDP + H(+). The catalysed reaction is an alpha-Neu5Ac-(2-&gt;3)-beta-D-Gal-(1-&gt;4)-beta-D-GlcNAc-(1-&gt;3)-beta-D-Gal-(1-&gt;4)-[alpha-L-Fuc-(1-&gt;3)]-beta-D-GlcNAc derivative + GDP-beta-L-fucose = an alpha-Neu5Ac-(2-&gt;3)-beta-D-Gal-(1-&gt;4)-[alpha-L-Fuc-(1-&gt;3)]-beta-D-GlcNAc-(1-&gt;3)-beta-D-Gal-(1-&gt;4)-[alpha-L-Fuc-(1-&gt;3)]-beta-D-GlcNAc derivative + GDP + H(+). It carries out the reaction a neolactoside nLc6Cer + GDP-beta-L-fucose = beta-D-Gal-(1-&gt;4)-[alpha-L-Fuc-(1-&gt;3)]-beta-D-GlcNAc-(1-&gt;3)-beta-D-Gal-(1-&gt;4)-beta-D-GlcNAc-(1-&gt;3)-beta-D-Gal-(1-&gt;4)-beta-D-Glc-(1&lt;-&gt;1')-Cer + GDP + H(+). The enzyme catalyses a neolactoside nLc6Cer + GDP-beta-L-fucose = beta-D-galactosyl-(1-&gt;4)-N-acetyl-beta-D-glucosaminyl-(1-&gt;3)-beta-D-galactosyl-(1-&gt;4)-[alpha-L-fucosyl-(1-&gt;3)]-N-acetyl-beta-D-glucosaminyl-(1-&gt;3)-beta-D-galactosyl-(1-&gt;4)-beta-D-glucosyl-(1&lt;-&gt;1')-ceramide + GDP + H(+). It catalyses the reaction a neolactoside VI(3)-alpha-NeuNAc-nLc6Cer + GDP-beta-L-fucose = a neolactoside VI(3)-alpha-NeuAc,V(3)-alphaFuc-nLc6Cer + GDP + H(+). The catalysed reaction is beta-D-galactosyl-(1-&gt;4)-N-acetyl-D-glucosamine + GDP-beta-L-fucose = beta-D-galactosyl-(1-&gt;4)-[alpha-L-fucosyl-(1-&gt;3)]-N-acetyl-D-glucosamine + GDP + H(+). It carries out the reaction N-acetyl-alpha-neuraminosyl-(2-&gt;3)-beta-D-galactosyl-(1-&gt;4)-N-acetyl-beta-D-glucosamine + GDP-beta-L-fucose = N-acetyl-alpha-neuraminosyl-(2-&gt;3)-beta-D-galactosyl-(1-&gt;4)-[alpha-L-fucosyl-(1-&gt;3)]-N-acetyl-beta-D-glucosamine + GDP + H(+). The enzyme catalyses lactose + GDP-beta-L-fucose = beta-D-galactosyl-(1-&gt;4)-[alpha-L-fucosyl-(1-&gt;3)]-D-glucose + GDP + H(+). It catalyses the reaction alpha-L-Fuc-(1-&gt;2)-beta-D-Gal-(1-&gt;4)-D-Glc + GDP-beta-L-fucose = alpha-L-Fuc-(1-&gt;2)-beta-D-Gal-(1-&gt;4)-[alpha-L-Fuc-(1-&gt;3)]-D-Glc + GDP + H(+). The catalysed reaction is a beta-D-galactosyl-(1-&gt;4)-N-acetyl-beta-D-6-sulfooxy-glucosaminyl derivative + GDP-beta-L-fucose = a beta-D-galactosyl-(1-&gt;4)-[alpha-L-fucosyl-(1-&gt;3)]-N-acetyl-beta-D-6-sulfooxy-glucosaminyl derivative + GDP + H(+). It functions in the pathway protein modification; protein glycosylation. Functionally, catalyzes the transfer of L-fucose, from a guanosine diphosphate-beta-L-fucose, to the N-acetyl glucosamine (GlcNAc) of a distal alpha2,3 sialylated lactosamine unit of a glycoprotein- or a glycolipid-linked sialopolylactosamines chain or of a distal or internal lactosamine unit of a neutral glycoprotein- or a glycolipid-linked polylactosamines chain through an alpha-1,3 glycosidic linkage and participates in surface expression of the sialyl Lewis X (sLe(x)), Lewis X (Le(x)) and non sialylated VIM2 determinants. Moreover transfers fucose to H-type 2 (Fucalpha1-2Galbeta1-4GlcNAc) chain acceptor substrates and participates in difucosylated sialyl Lewis x determinants. Also fucosylates a polylactosamine substrate having a 6 sulfate modification at the GlcNAc moiety and gives rise to sialyl and non-sialyl 6-sulfo lewis X. Does not have activity towards type 1 ((Galbeta1-3GlcNAc)) and H-type 1 chain (Fucalpha1-2Galbeta1-3GlcNAc) acceptors substrates. In terms of biological role, does not have alpha(1,3)-fucosyltransferase activity. This Homo sapiens (Human) protein is 4-galactosyl-N-acetylglucosaminide 3-alpha-L-fucosyltransferase FUT6.